We begin with the raw amino-acid sequence, 167 residues long: Endoribonuclease YbeY (167 aa).

Residues 64-101 (GKPTNVLSWPSEERASEEPGMAPEPPEPGDPEDPEPLG) are disordered. Acidic residues predominate over residues 90–99 (EPGDPEDPEP). Zn(2+) is bound by residues histidine 131, histidine 135, and histidine 141.

It belongs to the endoribonuclease YbeY family. Zn(2+) is required as a cofactor.

It is found in the cytoplasm. Single strand-specific metallo-endoribonuclease involved in late-stage 70S ribosome quality control and in maturation of the 3' terminus of the 16S rRNA. The protein is Endoribonuclease YbeY of Cereibacter sphaeroides (strain ATCC 17023 / DSM 158 / JCM 6121 / CCUG 31486 / LMG 2827 / NBRC 12203 / NCIMB 8253 / ATH 2.4.1.) (Rhodobacter sphaeroides).